Here is a 180-residue protein sequence, read N- to C-terminus: ATP-dependent protease subunit HslV (180 aa).

Residue Thr9 is part of the active site. Na(+) contacts are provided by Ala164, Cys167, and Thr170.

This sequence belongs to the peptidase T1B family. HslV subfamily. As to quaternary structure, a double ring-shaped homohexamer of HslV is capped on each side by a ring-shaped HslU homohexamer. The assembly of the HslU/HslV complex is dependent on binding of ATP.

Its subcellular location is the cytoplasm. It catalyses the reaction ATP-dependent cleavage of peptide bonds with broad specificity.. Its activity is regulated as follows. Allosterically activated by HslU binding. Functionally, protease subunit of a proteasome-like degradation complex believed to be a general protein degrading machinery. This is ATP-dependent protease subunit HslV from Leptospira interrogans serogroup Icterohaemorrhagiae serovar Lai (strain 56601).